The primary structure comprises 472 residues: Glutamate--tRNA ligase (472 aa).

Positions 9-19 match the 'HIGH' region motif; that stretch reads PSPTGYLHVGG. Positions 98, 100, 125, and 127 each coordinate Zn(2+). The short motif at 237–241 is the 'KMSKS' region element; the sequence is KLSKR. Lys-240 contacts ATP.

This sequence belongs to the class-I aminoacyl-tRNA synthetase family. Glutamate--tRNA ligase type 1 subfamily. Monomer. Requires Zn(2+) as cofactor.

Its subcellular location is the cytoplasm. It carries out the reaction tRNA(Glu) + L-glutamate + ATP = L-glutamyl-tRNA(Glu) + AMP + diphosphate. Catalyzes the attachment of glutamate to tRNA(Glu) in a two-step reaction: glutamate is first activated by ATP to form Glu-AMP and then transferred to the acceptor end of tRNA(Glu). The polypeptide is Glutamate--tRNA ligase (Klebsiella pneumoniae subsp. pneumoniae (strain ATCC 700721 / MGH 78578)).